Reading from the N-terminus, the 1309-residue chain is Clustered mitochondria protein homolog (1309 aa).

The interval M1 to E34 is disordered. Residues E9–G25 are compositionally biased toward basic and acidic residues. Phosphoserine occurs at positions 279 and 281. A Clu domain is found at R335–L577. Residues L636–E651 show a composition bias toward polar residues. The segment at L636–L674 is disordered. Residues S654, S664, and S723 each carry the phosphoserine modification. TPR repeat units follow at residues A978–V1011, C1020–V1053, A1104–Y1137, and A1146–Q1179. The segment covering H1264–E1278 has biased composition (basic and acidic residues). The segment at H1264–G1309 is disordered. Residues P1279–P1290 are compositionally biased toward low complexity.

The protein belongs to the CLU family.

The protein resides in the cytoplasm. The protein localises to the cytoplasmic granule. Its function is as follows. mRNA-binding protein involved in proper cytoplasmic distribution of mitochondria. Specifically binds mRNAs of nuclear-encoded mitochondrial proteins in the cytoplasm and regulates transport or translation of these transcripts close to mitochondria, playing a role in mitochondrial biogenesis. This is Clustered mitochondria protein homolog (CLUH) from Homo sapiens (Human).